A 563-amino-acid polypeptide reads, in one-letter code: uncharacterized protein (563 aa).

Positions 19–45 form a DNA-binding region, zn(2)-C6 fungal-type; sequence CLICRRRKVKCDRQQPCSRCKERNEVC. A disordered region spans residues 56-78; the sequence is NVGPHPSHSENASDSETTLEVSP. Positions 64–75 are enriched in polar residues; sequence SENASDSETTLE.

It localises to the nucleus. This is an uncharacterized protein from Schizosaccharomyces pombe (strain 972 / ATCC 24843) (Fission yeast).